We begin with the raw amino-acid sequence, 211 residues long: N-(5'-phosphoribosyl)anthranilate isomerase (211 aa).

The protein belongs to the TrpF family.

The enzyme catalyses N-(5-phospho-beta-D-ribosyl)anthranilate = 1-(2-carboxyphenylamino)-1-deoxy-D-ribulose 5-phosphate. It functions in the pathway amino-acid biosynthesis; L-tryptophan biosynthesis; L-tryptophan from chorismate: step 3/5. The chain is N-(5'-phosphoribosyl)anthranilate isomerase from Pseudomonas aeruginosa (strain LESB58).